Here is a 132-residue protein sequence, read N- to C-terminus: Glycine cleavage system H protein (132 aa).

The Lipoyl-binding domain occupies 24–106 (LVRIGISAFA…HGEGWLLVVR (83 aa)). N6-lipoyllysine is present on lysine 65.

Belongs to the GcvH family. As to quaternary structure, the glycine cleavage system is composed of four proteins: P, T, L and H. (R)-lipoate serves as cofactor.

Its function is as follows. The glycine cleavage system catalyzes the degradation of glycine. The H protein shuttles the methylamine group of glycine from the P protein to the T protein. In Prochlorococcus marinus (strain MIT 9313), this protein is Glycine cleavage system H protein.